We begin with the raw amino-acid sequence, 250 residues long: Probable aquaporin TIP-type (250 aa).

2 consecutive transmembrane segments (helical) span residues 22–42 and 56–76; these read AGLA…GSGI and AGLI…VSVG. Residues 85-87 carry the NPA 1 motif; sequence NPA. A run of 3 helical transmembrane segments spans residues 104–124, 138–158, and 170–190; these read IVYI…LVFV, VGVG…VYTV, and IGII…LVGG. The NPA 2 motif lies at 198–200; sequence NPA. The helical transmembrane segment at 218 to 238 threads the bilayer; sequence YWAGPLIGGGIAGLVYEVLFI.

It belongs to the MIP/aquaporin (TC 1.A.8) family. TIP (TC 1.A.8.10) subfamily.

The protein resides in the membrane. Functionally, aquaporins facilitate the transport of water and small neutral solutes across cell membranes. May have a role in buffering osmotic fluctations in the highly compartmented vacuole of arbuscule cells. The chain is Probable aquaporin TIP-type (AQP1) from Medicago truncatula (Barrel medic).